The chain runs to 201 residues: Small ribosomal subunit protein uS4c (201 aa).

Residues 20-43 form a disordered region; the sequence is GLTSKRPRAGSDLRNQSRAGKKSQ. In terms of domain architecture, S4 RNA-binding spans 89–150; the sequence is MRLDNILFRL…EQKSRVMIQN (62 aa).

This sequence belongs to the universal ribosomal protein uS4 family. As to quaternary structure, part of the 30S ribosomal subunit. Contacts protein S5. The interaction surface between S4 and S5 is involved in control of translational fidelity.

It localises to the plastid. The protein resides in the chloroplast. Its function is as follows. One of the primary rRNA binding proteins, it binds directly to 16S rRNA where it nucleates assembly of the body of the 30S subunit. Functionally, with S5 and S12 plays an important role in translational accuracy. In Populus alba (White poplar), this protein is Small ribosomal subunit protein uS4c (rps4).